The following is a 1865-amino-acid chain: Endoribonuclease Dicer (1865 aa).

Positions 41–213 constitute a Helicase ATP-binding domain; it reads LLEAALEHNT…DLEEKIQNLE (173 aa). 54 to 61 lines the ATP pocket; it reads LNTGSGKT. The short motif at 161 to 164 is the DECH box element; that stretch reads DECH. The tract at residues 397-417 is disordered; sequence SWSDSEDDDEDEEAEAKEKTE. The segment covering 400–411 has biased composition (acidic residues); that stretch reads DSEDDDEDEEAE. A Helicase C-terminal domain is found at 419–588; the sequence is NFPSPFTNIL…SAECNDFELE (170 aa). In terms of domain architecture, Dicer dsRNA-binding fold spans 616–708; sequence AIGHVNRYCA…MPVGKETVKY (93 aa). Residues 713-732 are disordered; it reads DLHDEEETSVPGRPGSTKRR. The 148-residue stretch at 881–1028 folds into the PAZ domain; sequence KFMEDIEKSE…LVPELCAIHP (148 aa). 2 stretches are compositionally biased toward polar residues: residues 1111–1128 and 1192–1201; these read GTSS…SMEV and STQTTTSVSV. Disordered regions lie at residues 1111–1142 and 1190–1259; these read GTSS…PDEK and DLST…DCRS. The segment covering 1240-1252 has biased composition (low complexity); sequence SETATSTPAPSET. The region spanning 1262–1385 is the RNase III 1 domain; the sequence is AGPAWDSPKT…TDKWDSDENK (124 aa). Positions 1298, 1377, and 1380 each coordinate Mg(2+). The segment at 1373 to 1417 is disordered; sequence KSSTDKWDSDENKDLANGKASDDEDEDDDDEPEEAEVEPSKEDVN. Positions 1374–1388 are enriched in basic and acidic residues; it reads SSTDKWDSDENKDLA. Positions 1394–1409 are enriched in acidic residues; the sequence is DDEDEDDDDEPEEAEV. Residues 1609–1767 form the RNase III 2 domain; that stretch reads FLNFESKINY…LAGAIYMDSG (159 aa). E1648, D1753, and E1756 together coordinate Mg(2+). In terms of domain architecture, DRBM spans 1792-1857; it reads VPRSPVRELL…ARRALRSLKA (66 aa).

Belongs to the helicase family. Dicer subfamily. As to quaternary structure, component of the RISC loading complex (RLC), or micro-RNA (miRNA) loading complex (miRLC), which is composed of dicer1, ago2 and tarbp2; dicer1 and tarbp2 are required to process precursor miRNAs (pre-miRNAs) to mature miRNAs and then load them onto ago2. Note that the trimeric RLC/miRLC is also referred to as RISC. It depends on Mg(2+) as a cofactor. Mn(2+) serves as cofactor.

It is found in the cytoplasm. The catalysed reaction is Endonucleolytic cleavage to 5'-phosphomonoester.. Functionally, double-stranded RNA (dsRNA) endoribonuclease playing a central role in short dsRNA-mediated post-transcriptional gene silencing. Cleaves naturally occurring long dsRNAs and short hairpin pre-microRNAs (miRNA) into fragments of twenty-one to twenty-three nucleotides with 3' overhang of two nucleotides, producing respectively short interfering RNAs (siRNA) and mature microRNAs. SiRNAs and miRNAs serve as guide to direct the RNA-induced silencing complex (RISC) to complementary RNAs to degrade them or prevent their translation. Gene silencing mediated by siRNAs, also called RNA interference, controls the elimination of transcripts from mobile and repetitive DNA elements of the genome but also the degradation of exogenous RNA of viral origin for instance. The miRNA pathway on the other side is a mean to specifically regulate the expression of target genes. The protein is Endoribonuclease Dicer (dicer1) of Danio rerio (Zebrafish).